Here is a 417-residue protein sequence, read N- to C-terminus: Acetyltransferase nanB (417 aa).

A signal peptide spans 1 to 24; sequence MRPSTTTLSLLVFLISSILLATTG. 5 helical membrane passes run 150-170, 284-304, 307-327, 356-376, and 389-409; these read LAVS…LKNI, YLNN…FNWI, VQDG…GYFL, VGAL…VYPF, and FVDV…AAAL.

Belongs to the wax synthase family.

The protein localises to the membrane. It functions in the pathway secondary metabolite biosynthesis. Acetyltransferase; part of the gene cluster that mediates the biosynthesis of the benzazepine alkaloid nanangelenin A which contains an unprecedented 3,4-dihydro-1-benzazepine-2,5-dione-N-prenyl-N-acetoxy-anthranilamide scaffold. The first step of nanangelenin biosynthesis is catalyzed by the indoleamine 2,3-dioxygenase nanC which produces N-formyl-kynurenine through the catabolism of tryptophan. The two-module NRPS nanA then utilizes anthranilate (Ant) and L-kynurenine (L-Kyn) to assemble the dipeptide product nanangelenin B. The first adenylation domain of nanA (A1) loads anthranilate onto the T1 domain, while A2 loads kynurenine, generated through spontaneous nonenzymatic deformylation of the nanC-supplied N-formyl-kynurenine. The peptide bond formation between the tethered amino acids is catalyzed by the first condensation domain (C1) between anthranilate's carbonyl carbon and kynurenine's aliphatic primary amine. The second C domain (C2) catalyzes the final cyclization event between the aromatic amine of kynurenine and the tethered carbonyl carbon, yielding nanangelenin B. The terminal T3 domain enhances the catalytic efficiency of C2, suggesting the T2-tethered Ant-L-Kyn is transferred to T3 prior to cyclization by C2. Once released from nanA, nanangelenin B is then prenylated by the prenyltransferase nanD to form nanangelenin C. Nanangelenin C is then N-hydroxylated by the FAD-dependent monooxygenase nanF and further acetylated by the acetyltransferase nanB to yield nanangelenin F. Finally, the N-methyltransferase nanE methylates the amide nitrogen of 1-benzazepine to convert nanangelenin F into nanangelenin A. NanE is also able to methylate most of the intermediates of the pathway such as nanangelenin B and nanangelenin C to produce nanangelenin D and nanangelenin E, respectively. The polypeptide is Acetyltransferase nanB (Aspergillus nanangensis).